Here is a 435-residue protein sequence, read N- to C-terminus: Serine/threonine-protein kinase 40 (435 aa).

Residues 1-10 show a composition bias toward basic and acidic residues; sequence MKRRASDRGA. The disordered stretch occupies residues 1–25; sequence MKRRASDRGAGETSARAKALGSGIS. The Protein kinase domain maps to 35-331; it reads FILGPRLGNS…ADVLEALSAI (297 aa). Residues 41–49 and Lys-66 contribute to the ATP site; that span reads LGNSPVPSI. Arg-196 serves as the catalytic Proton acceptor.

Belongs to the protein kinase superfamily. CAMK Ser/Thr protein kinase family. In terms of tissue distribution, strongly expressed in heart, brain, placenta, lung, skeletal muscle, kidney, spleen, thymus, prostate, liver, pancreas, testis, ovary, small intestine, colon and peripheral blood leukocytes.

The protein resides in the nucleus. It is found in the cytoplasm. It catalyses the reaction L-seryl-[protein] + ATP = O-phospho-L-seryl-[protein] + ADP + H(+). The catalysed reaction is L-threonyl-[protein] + ATP = O-phospho-L-threonyl-[protein] + ADP + H(+). May be a negative regulator of NF-kappa-B and p53-mediated gene transcription. The chain is Serine/threonine-protein kinase 40 (STK40) from Homo sapiens (Human).